We begin with the raw amino-acid sequence, 286 residues long: Thymidylate synthase (286 aa).

140–141 (RR) is a dUMP binding site. The active-site Nucleophile is Cys-161. DUMP is bound by residues 185-188 (RSND), Asn-196, and 226-228 (HIY). Asp-188 serves as a coordination point for (6R)-5,10-methylene-5,6,7,8-tetrahydrofolate. Ala-285 is a (6R)-5,10-methylene-5,6,7,8-tetrahydrofolate binding site.

Belongs to the thymidylate synthase family. Bacterial-type ThyA subfamily. Homodimer.

It localises to the cytoplasm. It catalyses the reaction dUMP + (6R)-5,10-methylene-5,6,7,8-tetrahydrofolate = 7,8-dihydrofolate + dTMP. The protein operates within pyrimidine metabolism; dTTP biosynthesis. In terms of biological role, catalyzes the reductive methylation of 2'-deoxyuridine-5'-monophosphate (dUMP) to 2'-deoxythymidine-5'-monophosphate (dTMP) while utilizing 5,10-methylenetetrahydrofolate (mTHF) as the methyl donor and reductant in the reaction, yielding dihydrofolate (DHF) as a by-product. This enzymatic reaction provides an intracellular de novo source of dTMP, an essential precursor for DNA biosynthesis. This is Thymidylate synthase from Streptococcus thermophilus (strain ATCC BAA-491 / LMD-9).